The sequence spans 572 residues: Isocitrate lyase (572 aa).

Residue 104 to 106 (SGW) participates in substrate binding. Mg(2+) is bound at residue aspartate 175. The active-site Proton acceptor is the cysteine 213. Substrate contacts are provided by residues 214–215 (GH), arginine 250, 437–441 (NLSPS), and threonine 472. Residues 550–572 (QFKGSWTGPGSESSSHVLAKSRM) form a disordered region. The short motif at 570–572 (SRM) is the Microbody targeting signal element.

Belongs to the isocitrate lyase/PEP mutase superfamily. Isocitrate lyase family. Mg(2+) is required as a cofactor. In terms of tissue distribution, expressed in leaves.

The protein localises to the glyoxysome. The catalysed reaction is D-threo-isocitrate = glyoxylate + succinate. Its pathway is carbohydrate metabolism; glyoxylate cycle; (S)-malate from isocitrate: step 1/2. In terms of biological role, involved in storage lipid mobilization during the growth of higher plant seedling. This is Isocitrate lyase from Oryza sativa subsp. japonica (Rice).